We begin with the raw amino-acid sequence, 335 residues long: MSKRKAPQETLNGGITDMLVELANFEKNVSQAIHKYNAYRKAASVIAKYPHKIKSGAEAKKLPGVGTKIAEKIDEFLATGKLRKLEKIRQDDTSSSINFLTRVTGIGPSAARKLVDEGIKTLEDLRKNEDKLNHHQRIGLKYFEDFEKRIPREEMLQMQDIVLNEVKKLDPEYIATVCGSFRRGAESSGDMDVLLTHPNFTSESSKQPKLLHRVVEQLQKVRFITDTLSKGETKFMGVCQLPSENDENEYPHRRIDIRLIPKDQYYCGVLYFTGSDIFNKNMRAHALEKGFTINEYTIRPLGVTGVAGEPLPVDSEQDIFDYIQWRYREPKDRSE.

Lys-41 is covalently cross-linked (Glycyl lysine isopeptide (Lys-Gly) (interchain with G-Cter in ubiquitin)). Lys-60 is a K(+) binding site. Lys-60 provides a ligand contact to Na(+). Lys-61 participates in a covalent cross-link: Glycyl lysine isopeptide (Lys-Gly) (interchain with G-Cter in ubiquitin). Leu-62 and Val-65 together coordinate K(+). Residues Leu-62 and Val-65 each contribute to the Na(+) site. Lys-72 serves as the catalytic Nucleophile; Schiff-base intermediate with DNA; for 5'-dRP lyase activity. N6-acetyllysine is present on Lys-72. Residue Lys-81 forms a Glycyl lysine isopeptide (Lys-Gly) (interchain with G-Cter in ubiquitin) linkage. Arg-83 is modified (omega-N-methylarginine; by PRMT6). Residues Thr-101, Val-103, and Ile-106 each contribute to the K(+) site. Na(+) contacts are provided by Thr-101, Val-103, and Ile-106. A 2'-deoxyribonucleoside 5'-triphosphate is bound at residue Arg-149. Arg-152 is modified (omega-N-methylarginine; by PRMT6). Ser-180, Arg-183, Gly-189, and Asp-190 together coordinate a 2'-deoxyribonucleoside 5'-triphosphate. The segment at 183–192 (RGAESSGDMD) is DNA-binding. Positions 190, 192, and 256 each coordinate Mg(2+).

This sequence belongs to the DNA polymerase type-X family. In terms of assembly, monomer. Binds single-stranded DNA (ssDNA). Interacts with APEX1, LIG1, LIG3, FEN1, PCNA and XRCC1. Interacts with HUWE1/ARF-BP1, STUB1/CHIP and USP47. Interacts with FAM168A. Mg(2+) serves as cofactor. Post-translationally, methylation by PRMT6 stimulates the polymerase activity by enhancing DNA binding and processivity. In terms of processing, ubiquitinated at Lys-41, Lys-61 and Lys-81: monoubiquitinated by HUWE1/ARF-BP1. Monoubiquitinated protein is then the target of STUB1/CHIP, which catalyzes polyubiquitination from monoubiquitin, leading to degradation by the proteasome. USP47 mediates the deubiquitination of monoubiquitinated protein, preventing polyubiquitination by STUB1/CHIP and its subsequent degradation.

The protein resides in the nucleus. It is found in the cytoplasm. The catalysed reaction is DNA(n) + a 2'-deoxyribonucleoside 5'-triphosphate = DNA(n+1) + diphosphate. It carries out the reaction a 5'-end 2'-deoxyribose-2'-deoxyribonucleotide-DNA = (2E,4S)-4-hydroxypenten-2-al-5-phosphate + a 5'-end 5'-phospho-2'-deoxyribonucleoside-DNA + H(+). It catalyses the reaction 2'-deoxyribonucleotide-(2'-deoxyribose 5'-phosphate)-2'-deoxyribonucleotide-DNA = a 3'-end 2'-deoxyribonucleotide-(2,3-dehydro-2,3-deoxyribose 5'-phosphate)-DNA + a 5'-end 5'-phospho-2'-deoxyribonucleoside-DNA + H(+). Its function is as follows. Repair polymerase that plays a key role in base-excision repair. During this process, the damaged base is excised by specific DNA glycosylases, the DNA backbone is nicked at the abasic site by an apurinic/apyrimidic (AP) endonuclease, and POLB removes 5'-deoxyribose-phosphate from the preincised AP site acting as a 5'-deoxyribose-phosphate lyase (5'-dRP lyase); through its DNA polymerase activity, it adds one nucleotide to the 3' end of the arising single-nucleotide gap. Conducts 'gap-filling' DNA synthesis in a stepwise distributive fashion rather than in a processive fashion as for other DNA polymerases. It is also able to cleave sugar-phosphate bonds 3' to an intact AP site, acting as an AP lyase. The protein is DNA polymerase beta (Polb) of Rattus norvegicus (Rat).